Consider the following 561-residue polypeptide: Potassium-transporting ATPase potassium-binding subunit (561 aa).

10 helical membrane passes run 4 to 24 (IVMQDAFFVVLLLVLAVPLGI), 65 to 85 (AVSVLAFSAVGFVFVMAVLML), 133 to 153 (IGLTVQNFVSAATGIAVLFAV), 177 to 197 (LYILLPLSLILALLLVSQGVV), 253 to 273 (FTNLIEMLAILLIPVALVVMF), 285 to 305 (AIMTAMMIVFVIGVVAITISE), 380 to 400 (GLYGMIGFIILTVFIAGLLVG), 417 to 437 (MVCLLILVPPLLTLFGTAVAV), 484 to 504 (MVGAVMMLLARFIPLVAALYL), and 528 to 548 (FIGLLIGVVVLVGALSFLPAL).

This sequence belongs to the KdpA family. In terms of assembly, the system is composed of three essential subunits: KdpA, KdpB and KdpC.

The protein resides in the cell membrane. Its function is as follows. Part of the high-affinity ATP-driven potassium transport (or Kdp) system, which catalyzes the hydrolysis of ATP coupled with the electrogenic transport of potassium into the cytoplasm. This subunit binds the extracellular potassium ions and delivers the ions to the membrane domain of KdpB through an intramembrane tunnel. The protein is Potassium-transporting ATPase potassium-binding subunit of Listeria monocytogenes serotype 4b (strain F2365).